The chain runs to 117 residues: Protein Wnt-6 (117 aa).

S1 carries the O-palmitoleoyl serine; by PORCN lipid modification. C83 and C98 form a disulfide bridge. N-linked (GlcNAc...) asparagine glycosylation is present at N84.

This sequence belongs to the Wnt family. In terms of processing, palmitoleoylation is required for efficient binding to frizzled receptors. Depalmitoleoylation leads to Wnt signaling pathway inhibition.

It is found in the secreted. It localises to the extracellular space. Its subcellular location is the extracellular matrix. In terms of biological role, ligand for members of the frizzled family of seven transmembrane receptors. Probable developmental protein. May be a signaling molecule which affects the development of discrete regions of tissues. Is likely to signal over only few cell diameters. This chain is Protein Wnt-6 (WNT-6), found in Plethodon jordani (Red-cheeked salamander).